We begin with the raw amino-acid sequence, 895 residues long: Stonin-2 (895 aa).

Disordered stretches follow at residues 10–101 (THQS…AISN), 144–204 (ASES…METI), and 236–279 (NEVG…PKST). The segment covering 64–73 (SHSEQDDSSE) has biased composition (basic and acidic residues). Composition is skewed to polar residues over residues 145 to 169 (SESS…TDLQ) and 179 to 193 (GRAS…SSSL). A phosphoserine mark is found at serine 278, serine 284, and serine 299. Disordered stretches follow at residues 291-326 (ISSL…SPIN) and 386-424 (QIDD…PRDG). 2 consecutive short sequence motifs (NPF) follow at residues 310 to 312 (NPF) and 326 to 328 (NPF). Positions 311–323 (PFLNESLQDIQPS) are enriched in polar residues. An SHD domain is found at 424–557 (GWPMMLRIPE…DLPVQSMDLS (134 aa)). The 308-residue stretch at 565-872 (EEEITVDIRD…AHYSYKVEIE (308 aa)) folds into the MHD domain. Residue serine 759 is modified to Phosphoserine.

It belongs to the Stoned B family. As to quaternary structure, interacts with the second C2 domain of synaptotagmins SYT1 and SYT2. Interacts with EPS15, EPS15R and ITSN1. Interacts indirectly with the AP-2 adapter complex. Interacts with TOR1A and COPS4; the interaction controls STON2 protein stability. Phosphorylated in vitro by PKD. Post-translationally, neddylated and ubiquitinated; leading to its degradation and inhibited by TOR1A and COPS4.

The protein resides in the synapse. It localises to the synaptosome. Its subcellular location is the cytoplasm. It is found in the membrane. In terms of biological role, adapter protein involved in endocytic machinery. Involved in the synaptic vesicle recycling. May facilitate clathrin-coated vesicle uncoating. The protein is Stonin-2 (Ston2) of Rattus norvegicus (Rat).